The following is a 244-amino-acid chain: Probable 2-phosphosulfolactate phosphatase (244 aa).

This sequence belongs to the ComB family. Requires Mg(2+) as cofactor.

It carries out the reaction (2R)-O-phospho-3-sulfolactate + H2O = (2R)-3-sulfolactate + phosphate. This chain is Probable 2-phosphosulfolactate phosphatase, found in Thermosynechococcus vestitus (strain NIES-2133 / IAM M-273 / BP-1).